A 198-amino-acid polypeptide reads, in one-letter code: Glycerol-3-phosphate acyltransferase (198 aa).

A run of 5 helical transmembrane segments spans residues phenylalanine 2 to valine 22, alanine 53 to phenylalanine 75, isoleucine 79 to alanine 98, leucine 113 to phenylalanine 133, and isoleucine 147 to leucine 167.

This sequence belongs to the PlsY family. Probably interacts with PlsX.

The protein resides in the cell membrane. It carries out the reaction an acyl phosphate + sn-glycerol 3-phosphate = a 1-acyl-sn-glycero-3-phosphate + phosphate. It participates in lipid metabolism; phospholipid metabolism. Its function is as follows. Catalyzes the transfer of an acyl group from acyl-phosphate (acyl-PO(4)) to glycerol-3-phosphate (G3P) to form lysophosphatidic acid (LPA). This enzyme utilizes acyl-phosphate as fatty acyl donor, but not acyl-CoA or acyl-ACP. This chain is Glycerol-3-phosphate acyltransferase, found in Bacillus cytotoxicus (strain DSM 22905 / CIP 110041 / 391-98 / NVH 391-98).